Consider the following 478-residue polypeptide: Ribosomal RNA small subunit methyltransferase F (478 aa).

S-adenosyl-L-methionine contacts are provided by residues 126–132, Glu-150, Asp-177, and Asp-195; that span reads AAAPGSK. Cys-248 (nucleophile) is an active-site residue.

It belongs to the class I-like SAM-binding methyltransferase superfamily. RsmB/NOP family.

It is found in the cytoplasm. It carries out the reaction cytidine(1407) in 16S rRNA + S-adenosyl-L-methionine = 5-methylcytidine(1407) in 16S rRNA + S-adenosyl-L-homocysteine + H(+). In terms of biological role, specifically methylates the cytosine at position 1407 (m5C1407) of 16S rRNA. In Erwinia tasmaniensis (strain DSM 17950 / CFBP 7177 / CIP 109463 / NCPPB 4357 / Et1/99), this protein is Ribosomal RNA small subunit methyltransferase F.